The primary structure comprises 249 residues: NAD(P)H-quinone oxidoreductase subunit K (249 aa).

C65, C66, C130, and C161 together coordinate [4Fe-4S] cluster.

It belongs to the complex I 20 kDa subunit family. NDH-1 can be composed of about 15 different subunits; different subcomplexes with different compositions have been identified which probably have different functions. Requires [4Fe-4S] cluster as cofactor.

The protein localises to the cellular thylakoid membrane. The enzyme catalyses a plastoquinone + NADH + (n+1) H(+)(in) = a plastoquinol + NAD(+) + n H(+)(out). It carries out the reaction a plastoquinone + NADPH + (n+1) H(+)(in) = a plastoquinol + NADP(+) + n H(+)(out). Its function is as follows. NDH-1 shuttles electrons from an unknown electron donor, via FMN and iron-sulfur (Fe-S) centers, to quinones in the respiratory and/or the photosynthetic chain. The immediate electron acceptor for the enzyme in this species is believed to be plastoquinone. Couples the redox reaction to proton translocation, and thus conserves the redox energy in a proton gradient. Cyanobacterial NDH-1 also plays a role in inorganic carbon-concentration. The chain is NAD(P)H-quinone oxidoreductase subunit K from Prochlorococcus marinus (strain NATL2A).